Consider the following 463-residue polypeptide: Glutamate--tRNA ligase 2 (463 aa).

The 'HIGH' region motif lies at 11-21; that stretch reads PSPTGYLHIGG. The 'KMSKS' region motif lies at 240–244; sequence KLSKR. An ATP-binding site is contributed by K243.

The protein belongs to the class-I aminoacyl-tRNA synthetase family. Glutamate--tRNA ligase type 1 subfamily. In terms of assembly, monomer.

It is found in the cytoplasm. The enzyme catalyses tRNA(Glu) + L-glutamate + ATP = L-glutamyl-tRNA(Glu) + AMP + diphosphate. Functionally, catalyzes the attachment of glutamate to tRNA(Glu) in a two-step reaction: glutamate is first activated by ATP to form Glu-AMP and then transferred to the acceptor end of tRNA(Glu). This chain is Glutamate--tRNA ligase 2, found in Campylobacter jejuni (strain RM1221).